A 109-amino-acid chain; its full sequence is ATPase inhibitor, mitochondrial (109 aa).

Residues Met1 to Arg22 constitute a mitochondrion transit peptide. Residues Leu27–Ala56 are N-terminal inhibitory region. Residues Leu27–Asp109 form a disordered region. A compositionally biased stretch (gly residues) spans Leu30–Ser43. Composition is skewed to basic and acidic residues over residues Gln55 to Glu69 and His77 to Arg98. A coiled-coil region spans residues Ile71 to Asp109. The tract at residues His78–Asp109 is antiparallel alpha-helical coiled coil region. Residues His99–Asp109 show a composition bias toward basic residues.

This sequence belongs to the ATPase inhibitor family. Homodimer; represents the active form and is present at a pH value below 6.5. Homotetramer; represents the inactive form and is present at a pH value above 7.0.

The protein localises to the mitochondrion. Its function is as follows. Endogenous F(1)F(o)-ATPase inhibitor limiting ATP depletion when the mitochondrial membrane potential falls below a threshold and the F(1)F(o)-ATP synthase starts hydrolyzing ATP to pump protons out of the mitochondrial matrix. Required to avoid the consumption of cellular ATP when the F(1)F(o)-ATP synthase enzyme acts as an ATP hydrolase. Indirectly acts as a regulator of heme synthesis in erythroid tissues: regulates heme synthesis by modulating the mitochondrial pH and redox potential, allowing fech to efficiently catalyze the incorporation of iron into protoporphyrin IX to produce heme. The sequence is that of ATPase inhibitor, mitochondrial from Xenopus tropicalis (Western clawed frog).